Reading from the N-terminus, the 296-residue chain is Protease HtpX homolog (296 aa).

2 helical membrane-spanning segments follow: residues 7-27 (TVLL…LVAG) and 29-49 (QGMI…YFFS). His-131 provides a ligand contact to Zn(2+). Glu-132 is an active-site residue. Residue His-135 participates in Zn(2+) binding. 2 consecutive transmembrane segments (helical) span residues 141–161 (ILIS…ANMA) and 178–198 (IASI…ATLI). Glu-207 contributes to the Zn(2+) binding site.

This sequence belongs to the peptidase M48B family. Zn(2+) serves as cofactor.

The protein localises to the cell inner membrane. The polypeptide is Protease HtpX homolog (Sulfurihydrogenibium sp. (strain YO3AOP1)).